The primary structure comprises 131 residues: Small ribosomal subunit protein bS6 (131 aa).

This sequence belongs to the bacterial ribosomal protein bS6 family.

Binds together with bS18 to 16S ribosomal RNA. The chain is Small ribosomal subunit protein bS6 from Borrelia hermsii (strain HS1 / DAH).